A 486-amino-acid polypeptide reads, in one-letter code: Glutamate--tRNA ligase (486 aa).

Residues 11–21 (PSPTGFLHIGG) carry the 'HIGH' region motif. Cys-108, Cys-110, Cys-136, and His-138 together coordinate Zn(2+). Positions 253-257 (KLSKR) match the 'KMSKS' region motif. Residue Lys-256 coordinates ATP.

The protein belongs to the class-I aminoacyl-tRNA synthetase family. Glutamate--tRNA ligase type 1 subfamily. As to quaternary structure, monomer. Zn(2+) is required as a cofactor.

The protein resides in the cytoplasm. It carries out the reaction tRNA(Glu) + L-glutamate + ATP = L-glutamyl-tRNA(Glu) + AMP + diphosphate. Functionally, catalyzes the attachment of glutamate to tRNA(Glu) in a two-step reaction: glutamate is first activated by ATP to form Glu-AMP and then transferred to the acceptor end of tRNA(Glu). The protein is Glutamate--tRNA ligase of Lysinibacillus sphaericus (strain C3-41).